Reading from the N-terminus, the 348-residue chain is Dihydroorotase (348 aa).

The Zn(2+) site is built by His14 and His16. Residues 16–18 (HLR) and Asn42 each bind substrate. The Zn(2+) site is built by Lys100, His137, and His175. Lys100 is subject to N6-carboxylysine. His137 provides a ligand contact to substrate. Leu220 contacts substrate. Asp248 contacts Zn(2+). Asp248 is an active-site residue. 2 residues coordinate substrate: His252 and Ala264.

Belongs to the metallo-dependent hydrolases superfamily. DHOase family. Class II DHOase subfamily. In terms of assembly, homodimer. Zn(2+) is required as a cofactor.

It carries out the reaction (S)-dihydroorotate + H2O = N-carbamoyl-L-aspartate + H(+). Its pathway is pyrimidine metabolism; UMP biosynthesis via de novo pathway; (S)-dihydroorotate from bicarbonate: step 3/3. In terms of biological role, catalyzes the reversible cyclization of carbamoyl aspartate to dihydroorotate. The polypeptide is Dihydroorotase (Synechococcus sp. (strain CC9605)).